Here is a 1158-residue protein sequence, read N- to C-terminus: Voltage-gated inwardly rectifying potassium channel KCNH2 (1158 aa).

Topologically, residues 1–402 (MPVRRGHVAP…RIHRWTILHY (402 aa)) are cytoplasmic. The PAS domain maps to 17 to 88 (TIIRKFEGQS…AAQIAQALLG (72 aa)). In terms of domain architecture, PAC spans 92–144 (RKVEIAFYRKDGSCFLCLVDVVPVKNEDGAVIMFILNFEVVMEKDMVGSPTHD). The segment at 232–314 (RALVGSSSPP…GAMHPLRGGL (83 aa)) is disordered. S239 bears the Phosphoserine mark. Residues 258 to 269 (PDASGSSCSLAR) show a composition bias toward polar residues. 4 positions are modified to phosphoserine: S283, S284, S319, and S350. Residues 403–423 (SPFKAVWDWLILLLVIYTAVF) traverse the membrane as a helical segment. The Extracellular segment spans residues 424–449 (TPYSAAFLLKETEEGPPAPDCGYACQ). A helical membrane pass occupies residues 450–470 (PLAVVDFIVDIMFIVDILINF). At 471 to 494 (RTTYVNANEEVVSHPGRIAVHYFK) the chain is on the cytoplasmic side. Residues 495–515 (GWFLIDMVAAIPFDLLIFGSG) traverse the membrane as a helical segment. Topologically, residues 516-519 (SEEL) are extracellular. The helical; Voltage-sensor transmembrane segment at 520 to 540 (IGLLKTARLLRLVRVARKLDR) threads the bilayer. The Cytoplasmic segment spans residues 541–546 (YSEYGA). A helical membrane pass occupies residues 547–567 (AVLFLLMCTFALIAHWLACIW). Over 568 to 610 (YAIGNMEQPHMDSRIGWLHNLGDQIGKPYNSSGLGGPSIKDKY) the chain is Extracellular. N597 carries N-linked (GlcNAc...) asparagine glycosylation. An intramembrane region (pore-forming) is located at residues 611-631 (VTALYFTFSSLTSVGFGNVSP). The Selectivity filter motif lies at 623-628 (SVGFGN). At 632–637 (NTNSEK) the chain is on the extracellular side. The chain crosses the membrane as a helical span at residues 638-658 (IFSICVMLIGSLMYASIFGNV). The Cytoplasmic portion of the chain corresponds to 659–1158 (SAIIQRLYSG…LHRHGSDPGS (500 aa)). Residues 741 to 841 (PFRGATKGCL…IHRDDLLEVL (101 aa)) form a cNMP-binding domain region. Positions 869-987 (GSPGSAELEG…KSSDTCNPLS (119 aa)) are disordered. 2 positions are modified to phosphoserine: S870 and S873. Positions 882 to 891 (RQRKRKLSFR) are enriched in basic residues. The segment covering 910-926 (GRAGAGPSGRGRPGGPW) has biased composition (gly residues). The span at 927 to 938 (GESPSSGPSSPE) shows a compositional bias: low complexity. The segment covering 959-969 (SPRPPGEPPGG) has biased composition (pro residues). R1013 is modified (omega-N-methylarginine). Residues 1034–1061 (RGDVEGRLDALQRQLNRLETRLSADMAT) are a coiled coil. A disordered region spans residues 1116-1158 (FEELPPGAPELPQDGPPRRLSLPGQLGALTSQPLHRHGSDPGS). The residue at position 1136 (S1136) is a Phosphoserine.

The protein belongs to the potassium channel family. H (Eag) (TC 1.A.1.20) subfamily. Kv11.1/KCNH2 sub-subfamily. The potassium channel is probably composed of a homo- or heterotetrameric complex of pore-forming alpha subunits that can associate with modulating beta subunits. Interacts with DNAJB12 and DNAJB14; chaperones DNAJB12 and DNAJB14 promote tetramerization. Heteromultimer with KCNH6/ERG2 and KCNH7/ERG3. Interacts with ALG10B. Forms a stable complex with KCNE1 or KCNE2, and that this heteromultimerization regulates Inward rectifier potassium channel activity. Interacts with CANX. The core-glycosylated, but not the fully glycosylated form interacts with RNF207. Interacts with NDFIP1 and NDFIP2; this interaction decreases the cell membrane expression by targeting KCNH2, through interaction with NEDD4L, for the degradation through the multivesicular bodies (MVBs)-lysosomal pathway. Post-translationally, phosphorylated on serine and threonine residues. Phosphorylation by PKA inhibits ion conduction. As to expression, highly expressed in left and right atria of the heart, in cortex and hippocampus; detected at intermediate levels in left and right ventricle, Purkinje fibers, cerebellum, thalamus and basal ganglia; detected at low levels in liver, spleen and kidney.

Its subcellular location is the cell membrane. The catalysed reaction is K(+)(in) = K(+)(out). Pore-forming (alpha) subunit of voltage-gated inwardly rectifying potassium channel. Characterized by unusual gating kinetics by producing relatively small outward currents during membrane depolarization and large inward currents during subsequent repolarization which reflect a rapid inactivation during depolarization and quick recovery from inactivation but slow deactivation (closing) during repolarization. Channel properties are modulated by cAMP and subunit assembly. Forms a stable complex with KCNE1 or KCNE2, and that this heteromultimerization regulates inward rectifier potassium channel activity. The protein is Voltage-gated inwardly rectifying potassium channel KCNH2 of Canis lupus familiaris (Dog).